Reading from the N-terminus, the 92-residue chain is Small ribosomal subunit protein uS19c (92 aa).

This sequence belongs to the universal ribosomal protein uS19 family.

The protein resides in the plastid. Its subcellular location is the chloroplast. In terms of biological role, protein S19 forms a complex with S13 that binds strongly to the 16S ribosomal RNA. In Amborella trichopoda, this protein is Small ribosomal subunit protein uS19c.